Consider the following 295-residue polypeptide: Methionine aminopeptidase (295 aa).

H63 serves as a coordination point for substrate. The a divalent metal cation site is built by D83, D94, and H154. Residue H162 coordinates substrate. Positions 188 and 281 each coordinate a divalent metal cation.

The protein belongs to the peptidase M24A family. Methionine aminopeptidase archaeal type 2 subfamily. As to quaternary structure, monomer. Fe(2+) is required as a cofactor. Co(2+) serves as cofactor. Requires Ni(2+) as cofactor. It depends on Mn(2+) as a cofactor.

The catalysed reaction is Release of N-terminal amino acids, preferentially methionine, from peptides and arylamides.. Its function is as follows. Removes the N-terminal methionine from nascent proteins. The N-terminal methionine is often cleaved when the second residue in the primary sequence is small and uncharged (Met-Ala-, Cys, Gly, Pro, Ser, Thr, or Val). The chain is Methionine aminopeptidase from Thermococcus onnurineus (strain NA1).